Here is a 67-residue protein sequence, read N- to C-terminus: Bombesin (67 aa).

A signal peptide spans 1-30 (MSLLPAVKVLPLGYLGIVLVFSLILRSAMV). Residues 31–49 (DFIQDAGKLERIDTYKREA) constitute a propeptide that is removed on maturation. Residue Gln-50 is modified to Pyrrolidone carboxylic acid. The residue at position 64 (Met-64) is a Methionine amide.

It belongs to the bombesin/neuromedin-B/ranatensin family. In terms of tissue distribution, expressed by the skin dorsal glands.

It is found in the secreted. Its function is as follows. Stimulates smooth muscle contraction in isolated rat stomach strip. The polypeptide is Bombesin (Sanguirana varians (Palawan frog)).